We begin with the raw amino-acid sequence, 213 residues long: General transcription factor 3C polypeptide 6 (213 aa).

Residues 1 to 11 (MAAAADERSPE) show a composition bias toward basic and acidic residues. Disordered stretches follow at residues 1–20 (MAAAADERSPEDGEDEEEEE) and 191–213 (SGPLIDIPSETEGSVFMETQMLP). Ala-2 carries the N-acetylalanine modification. Ser-9 is modified (phosphoserine).

It belongs to the TFIIIC subunit 6 family. In terms of assembly, part of the TFIIIC subcomplex TFIIIC2, consisting of six subunits, GTF3C1, GTF3C2, GTF3C3, GTF3C4, GTF3C5 and GTF3C6. Interacts with GTF3C4 and GTF3C5.

The protein localises to the nucleus. Functionally, involved in RNA polymerase III-mediated transcription. Integral, tightly associated component of the DNA-binding TFIIIC2 subcomplex that directly binds tRNA and virus-associated RNA promoters. This chain is General transcription factor 3C polypeptide 6 (GTF3C6), found in Homo sapiens (Human).